An 805-amino-acid chain; its full sequence is Angiotensin-converting enzyme 2 (805 aa).

Residues 1–17 (MSSSSWLLLSLVAVTTA) form the signal peptide. The Extracellular segment spans residues 18–740 (QSLTEENAKT…LEPPYQPPVT (723 aa)). Residues 19 to 607 (SLTEENAKTF…QNRNSFVGWN (589 aa)) enclose the Peptidase M2 domain. Asn53 carries N-linked (GlcNAc...) asparagine glycosylation. The cysteines at positions 133 and 141 are disulfide-linked. Residue Arg169 coordinates chloride. Substrate is bound by residues Arg273 and 345–346 (HP). Cysteines 344 and 361 form a disulfide. His374 serves as a coordination point for Zn(2+). Glu375 serves as the catalytic Proton acceptor. Residues His378 and Glu402 each contribute to the Zn(2+) site. Chloride-binding residues include Trp477 and Lys481. His505 acts as the Proton donor in catalysis. Residue Tyr515 coordinates substrate. Cys530 and Cys542 form a disulfide bridge. N-linked (GlcNAc...) asparagine glycosylation is found at Asn536 and Asn546. The Collectrin-like domain maps to 614-805 (ADQSIKVRIS…QNSDDAQTSF (192 aa)). The segment at 652-659 (RKYFSIIK) is essential for cleavage by ADAM17. N-linked (GlcNAc...) asparagine glycans are attached at residues Asn660 and Asn690. Residues 697–716 (RSEVEDAIRMSRGRINDVFG) are essential for cleavage by TMPRSS11D and TMPRSS2. A helical transmembrane segment spans residues 741-761 (IWLIIFGVVMALVVVGIIILI). The Cytoplasmic segment spans residues 762-805 (VTGIKGRKKKNETKREENPYDSMDIGKGESNAGFQNSDDAQTSF). The segment at 771 to 805 (KNETKREENPYDSMDIGKGESNAGFQNSDDAQTSF) is disordered. Positions 778-786 (ENPYDSMDI) match the LIR motif. A Phosphotyrosine modification is found at Tyr781. The Endocytic sorting signal motif lies at 781 to 784 (YDSM). An SH2-binding motif is present at residues 781–785 (YDSMD). Phosphoserine is present on Ser783. Residue Lys788 forms a Glycyl lysine isopeptide (Lys-Gly) (interchain with G-Cter in ubiquitin) linkage. Positions 792-795 (NAGF) match the PTB motif. The segment covering 793–805 (AGFQNSDDAQTSF) has biased composition (polar residues). Positions 803 to 805 (TSF) match the PDZ-binding motif.

This sequence belongs to the peptidase M2 family. As to quaternary structure, homodimer. Interacts with the catalytically active form of TMPRSS2. Interacts with SLC6A19; this interaction is essential for expression and function of SLC6A19 in intestine. Interacts with ITGA5:ITGB1. Probably interacts (via endocytic sorting signal motif) with AP2M1; the interaction is inhibited by phosphorylation of Tyr-781. Interacts (via PDZ-binding motif) with NHERF1 (via PDZ domains); the interaction may enhance ACE2 membrane residence. In terms of assembly, (Microbial infection) Weakly interacts with SARS-CoV S protein. The cofactor is Zn(2+). Chloride serves as cofactor. Proteolytic cleavage by ADAM17 generates a secreted form. Also cleaved by serine proteases: TMPRSS2, TMPRSS11D and HPN/TMPRSS1. In terms of processing, phosphorylated. Phosphorylation at Tyr-781 probably inhibits interaction with AP2M1 and enables interactions with proteins containing SH2 domains. Post-translationally, ubiquitinated. Ubiquitinated on Lys-788 via 'Lys-48'-linked ubiquitin. 'Lys-48'-linked deubiquitinated by USP50 on the Lys-788; leading to its stabilization. As to expression, expressed in heart, kidney and forebrain (at protein level). Expressed in the small intestine, with expression in the intestinal brush border (at protein level). Ubiquitously expressed, with highest levels in ileum, kidney and lung. In lung, expressed on vascular endothelial and airway epithelial cells. Also expressed at high levels in lung secretory club and goblet cells as well as in alveolar type 2 cells.

It localises to the secreted. The protein localises to the cell membrane. Its subcellular location is the cytoplasm. It is found in the cell projection. The protein resides in the cilium. It localises to the apical cell membrane. The enzyme catalyses angiotensin II + H2O = angiotensin-(1-7) + L-phenylalanine. It catalyses the reaction angiotensin I + H2O = angiotensin-(1-9) + L-leucine. The catalysed reaction is bradykinin(1-8) + H2O = bradykinin(1-7) + L-phenylalanine. It carries out the reaction neurotensin + H2O = neurotensin-(1-12) + L-leucine. The enzyme catalyses kinetensin + H2O = kinetensin-(1-8) + L-leucine. It catalyses the reaction dynorphin A-(1-13) + H2O = dynorphin A-(1-12) + L-lysine. The catalysed reaction is apelin-13 + H2O = apelin-12 + L-phenylalanine. It carries out the reaction [Pyr1]apelin-13 + H2O = [Pyr1]apelin-12 + L-phenylalanine. The enzyme catalyses apelin-17 + H2O = apelin-16 + L-phenylalanine. Its function is as follows. Essential counter-regulatory carboxypeptidase of the renin-angiotensin hormone system that is a critical regulator of blood volume, systemic vascular resistance, and thus cardiovascular homeostasis. Converts angiotensin I to angiotensin 1-9, a nine-amino acid peptide with anti-hypertrophic effects in cardiomyocytes, and angiotensin II to angiotensin 1-7, which then acts as a beneficial vasodilator and anti-proliferation agent, counterbalancing the actions of the vasoconstrictor angiotensin II. Also removes the C-terminal residue from three other vasoactive peptides, neurotensin, kinetensin, and des-Arg bradykinin, but is not active on bradykinin. Also cleaves other biological peptides, such as apelins, casomorphins and dynorphin A. By cleavage of angiotensin II, may be an important regulator of heart function. By cleavage of angiotensin II, may also have a protective role in acute lung injury. Plays an important role in amino acid transport by acting as binding partner of amino acid transporter SLC6A19, regulating its trafficking on the cell surface and its activity. In Mus musculus (Mouse), this protein is Angiotensin-converting enzyme 2 (Ace2).